The sequence spans 191 residues: MNPILHPLIDNGITPGDPNFAGGNLYCKCPQNKVTVTLKSNVAHNHACGCSKCWKPTGALFSVVGVVPRENLSVTANGDKLHVVDKNAVIQRNACRQCGVHMFGRIETEHPFKGLDFVHVELSDTRGWQEPQFAGFVSSIIEQGFDPSKMETVRSRFKAVGLETYDSLSPPLMDTIAAYTARKNGKLSARL.

The region spanning 20 to 166 (FAGGNLYCKC…FKAVGLETYD (147 aa)) is the CENP-V/GFA domain. Zn(2+) contacts are provided by cysteine 27, cysteine 29, cysteine 48, cysteine 50, cysteine 53, cysteine 95, and cysteine 98.

This sequence belongs to the Gfa family. It depends on Zn(2+) as a cofactor.

The enzyme catalyses S-(hydroxymethyl)glutathione = glutathione + formaldehyde. Its pathway is one-carbon metabolism; formaldehyde degradation; formate from formaldehyde (glutathione route): step 1/3. Catalyzes the condensation of formaldehyde and glutathione to S-hydroxymethylglutathione. The sequence is that of Putative glutathione-dependent formaldehyde-activating enzyme from Aspergillus terreus (strain NIH 2624 / FGSC A1156).